The chain runs to 67 residues: Probable pilin MJ1400 (67 aa).

Positions 1–13 (MKFIMKFIKSNKG) are excised as a propeptide. A QXSXEXXXL motif is present at residues 14–22 (QISLEFSLL).

In terms of processing, the N-terminus is cleaved by the prepilin peptidase EppA, which recognizes the class III signal sequence.

The protein localises to the secreted. It localises to the cell surface. Its subcellular location is the fimbrium. This Methanocaldococcus jannaschii (strain ATCC 43067 / DSM 2661 / JAL-1 / JCM 10045 / NBRC 100440) (Methanococcus jannaschii) protein is Probable pilin MJ1400.